A 546-amino-acid polypeptide reads, in one-letter code: Probable Dol-P-Man:Man(7)GlcNAc(2)-PP-Dol alpha-1,6-mannosyltransferase (546 aa).

The next 9 helical transmembrane spans lie at 5-25 (ESIC…YYSY), 67-87 (FIPS…VNPL), 113-133 (FGTL…HLVY), 166-186 (ILVF…MCLI), 200-220 (LLLV…LIDS), 258-278 (LPWL…FVYI), 283-303 (LLIY…HKEW), 305-325 (FIIY…SLCF), and 340-360 (LMFF…LYVF).

The protein belongs to the glycosyltransferase 22 family.

The protein resides in the endoplasmic reticulum membrane. The enzyme catalyses an alpha-D-Man-(1-&gt;2)-alpha-D-Man-(1-&gt;2)-alpha-D-Man-(1-&gt;3)-[alpha-D-Man-(1-&gt;2)-alpha-D-Man-(1-&gt;3)-alpha-D-Man-(1-&gt;6)]-beta-D-Man-(1-&gt;4)-beta-D-GlcNAc-(1-&gt;4)-alpha-D-GlcNAc-diphospho-di-trans,poly-cis-dolichol + a di-trans,poly-cis-dolichyl beta-D-mannosyl phosphate = an alpha-D-Man-(1-&gt;2)-alpha-D-Man-(1-&gt;2)-alpha-D-Man-(1-&gt;3)-[alpha-D-Man-(1-&gt;2)-alpha-D-Man-(1-&gt;3)-[alpha-D-Man-(1-&gt;6)]-alpha-D-Man-(1-&gt;6)]-beta-D-Man-(1-&gt;4)-beta-D-GlcNAc-(1-&gt;4)-alpha-D-GlcNAc-diphospho-di-trans,poly-cis-dolichol + a di-trans,poly-cis-dolichyl phosphate + H(+). Its pathway is protein modification; protein glycosylation. Mannosyltransferase that operates in the biosynthetic pathway of dolichol-linked oligosaccharides, the glycan precursors employed in protein asparagine (N)-glycosylation. The assembly of dolichol-linked oligosaccharides begins on the cytosolic side of the endoplasmic reticulum membrane and finishes in its lumen. The sequential addition of sugars to dolichol pyrophosphate produces dolichol-linked oligosaccharides containing fourteen sugars, including two GlcNAcs, nine mannoses and three glucoses. Once assembled, the oligosaccharide is transferred from the lipid to nascent proteins by oligosaccharyltransferases. In the lumen of the endoplasmic reticulum, adds the eighth mannose residue in an alpha-1,6 linkage onto Man(7)GlcNAc(2)-PP-dolichol to produce Man(8)GlcNAc(2)-PP-dolichol. The protein is Probable Dol-P-Man:Man(7)GlcNAc(2)-PP-Dol alpha-1,6-mannosyltransferase (alg12) of Schizosaccharomyces pombe (strain 972 / ATCC 24843) (Fission yeast).